Reading from the N-terminus, the 880-residue chain is Protein translocase subunit SecA (880 aa).

Residues Gln86, 104 to 108 (GEGKT), and Asp511 each bind ATP. A disordered region spans residues 837-871 (AQKIQRSDGDGARRPVEKPKKIGRNDPCPCGSGKK). The span at 841–860 (QRSDGDGARRPVEKPKKIGR) shows a compositional bias: basic and acidic residues. Positions 864, 866, 875, and 876 each coordinate Zn(2+).

Belongs to the SecA family. In terms of assembly, monomer and homodimer. Part of the essential Sec protein translocation apparatus which comprises SecA, SecYEG and auxiliary proteins SecDF. Other proteins may also be involved. Zn(2+) serves as cofactor.

It localises to the cell inner membrane. The protein localises to the cytoplasm. It catalyses the reaction ATP + H2O + cellular proteinSide 1 = ADP + phosphate + cellular proteinSide 2.. Functionally, part of the Sec protein translocase complex. Interacts with the SecYEG preprotein conducting channel. Has a central role in coupling the hydrolysis of ATP to the transfer of proteins into and across the cell membrane, serving as an ATP-driven molecular motor driving the stepwise translocation of polypeptide chains across the membrane. The chain is Protein translocase subunit SecA from Thermodesulfovibrio yellowstonii (strain ATCC 51303 / DSM 11347 / YP87).